The following is a 298-amino-acid chain: tRNA dimethylallyltransferase 2 (298 aa).

ATP is bound at residue 19–26 (GATATGKT). Residue 21–26 (TATGKT) coordinates substrate. Residues 44–47 (DSRQ) are interaction with substrate tRNA.

The protein belongs to the IPP transferase family. Monomer. Mg(2+) serves as cofactor.

It carries out the reaction adenosine(37) in tRNA + dimethylallyl diphosphate = N(6)-dimethylallyladenosine(37) in tRNA + diphosphate. In terms of biological role, catalyzes the transfer of a dimethylallyl group onto the adenine at position 37 in tRNAs that read codons beginning with uridine, leading to the formation of N6-(dimethylallyl)adenosine (i(6)A). This chain is tRNA dimethylallyltransferase 2, found in Treponema denticola (strain ATCC 35405 / DSM 14222 / CIP 103919 / JCM 8153 / KCTC 15104).